The sequence spans 484 residues: Ureidoglycolate hydrolase (484 aa).

The signal sequence occupies residues 1-28 (MATSAAARFLAALAGAAVLLVLLGGAAG). The Mn(2+) site is built by His-148, Asp-159, Glu-194, and His-262. 2 substrate regions span residues 193 to 194 (EE) and 262 to 265 (HIEQ). The interval 284–399 (APASIKVEFE…LSEFKIINQD (116 aa)) is involved in dimerization. The substrate site is built by His-298, Asn-348, and Arg-361. Residues 431-432 (YH) form a substrate region. His-456 contributes to the Mn(2+) binding site. His-456 contacts substrate.

The protein belongs to the peptidase M20 family. Homodimer. Mn(2+) is required as a cofactor. Requires Ni(2+) as cofactor. The cofactor is Co(2+).

It is found in the endoplasmic reticulum. It catalyses the reaction (S)-ureidoglycolate + H2O + 2 H(+) = glyoxylate + 2 NH4(+) + CO2. The protein operates within nitrogen metabolism; (S)-allantoin degradation; glyoxylate from (S)-ureidoglycolate: step 1/1. Its function is as follows. Involved in the catabolism of purine nucleotides. The sequential activity of AAH, UGLYAH and UAH allows a complete purine breakdown without the intermediate generation of urea. This chain is Ureidoglycolate hydrolase, found in Oryza sativa subsp. japonica (Rice).